Here is a 214-residue protein sequence, read N- to C-terminus: ER lumen protein-retaining receptor 3 (214 aa).

Residues 1-4 lie on the Lumenal side of the membrane; it reads MNIF. A helical membrane pass occupies residues 5-24; the sequence is RILGDVSHLLAIIILLLKMW. Topologically, residues 25 to 32 are cytoplasmic; sequence KSKSCAGI. A helical transmembrane segment spans residues 33–52; the sequence is SGKSQLLFALVFTTRYLDLF. The tract at residues 47–48 is interaction with the K-D-E-L motif on target proteins; the sequence is RY. The Lumenal segment spans residues 53-58; sequence TVFISP. Residues 59-79 form a helical membrane-spanning segment; it reads YNTVMKIIFLACAYVTVYLIY. The Cytoplasmic segment spans residues 80–92; sequence GKLRKSYDSENDT. Residues 93–110 form a helical membrane-spanning segment; sequence FRLEFLLVPVIGLSFLEN. Residues 111–116 are Lumenal-facing; sequence YEFTPL. A helical transmembrane segment spans residues 117-135; sequence EILWTFSIYLESVAILPQL. Over 136–149 the chain is Cytoplasmic; it reads FMISKTGEAESITT. Residues 150–168 form a helical membrane-spanning segment; it reads HYLFFLGLYRVLYLANWIW. Residues 159–169 are interaction with the K-D-E-L motif on target proteins; the sequence is RVLYLANWIWR. Residues 169-178 are Lumenal-facing; that stretch reads RYHTEKFYDQ. A helical transmembrane segment spans residues 179 to 199; the sequence is IAVVSGVVQTIFYFDFFYLYV. The Cytoplasmic segment spans residues 200–214; the sequence is TKVLKGKKLSLPMPV. The important for recycling of cargo proteins with the sequence motif K-D-E-L from the Golgi to the endoplasmic reticulum stretch occupies residues 204-207; it reads KGKK.

The protein belongs to the ERD2 family.

Its subcellular location is the endoplasmic reticulum membrane. The protein resides in the golgi apparatus membrane. It localises to the cytoplasmic vesicle. The protein localises to the COPI-coated vesicle membrane. Functionally, receptor for the C-terminal sequence motif K-D-E-L that is present on endoplasmic reticulum resident proteins and that mediates their recycling from the Golgi back to the endoplasmic reticulum. This chain is ER lumen protein-retaining receptor 3 (kdelr3), found in Xenopus laevis (African clawed frog).